Consider the following 235-residue polypeptide: 2-C-methyl-D-erythritol 4-phosphate cytidylyltransferase (235 aa).

Belongs to the IspD/TarI cytidylyltransferase family. IspD subfamily.

The enzyme catalyses 2-C-methyl-D-erythritol 4-phosphate + CTP + H(+) = 4-CDP-2-C-methyl-D-erythritol + diphosphate. It functions in the pathway isoprenoid biosynthesis; isopentenyl diphosphate biosynthesis via DXP pathway; isopentenyl diphosphate from 1-deoxy-D-xylulose 5-phosphate: step 2/6. In terms of biological role, catalyzes the formation of 4-diphosphocytidyl-2-C-methyl-D-erythritol from CTP and 2-C-methyl-D-erythritol 4-phosphate (MEP). The chain is 2-C-methyl-D-erythritol 4-phosphate cytidylyltransferase from Pseudomonas putida (strain ATCC 47054 / DSM 6125 / CFBP 8728 / NCIMB 11950 / KT2440).